A 965-amino-acid polypeptide reads, in one-letter code: UvrABC system protein A (965 aa).

Position 32-39 (32-39 (GLSGSGKS)) interacts with ATP. The C4-type zinc finger occupies 254–281 (CPVCDYSLPELEPRLFSFNAPMGACPAC). ABC transporter domains are found at residues 311–588 (WDRR…PRSL) and 608–937 (PNAT…HFLA). Position 641–648 (641–648 (GVSGSGKS)) interacts with ATP. Residues 740–766 (CEACEGDGLIKVEMHFLPDVYVPCDIC) form a C4-type zinc finger.

Belongs to the ABC transporter superfamily. UvrA family. In terms of assembly, forms a heterotetramer with UvrB during the search for lesions.

The protein localises to the cytoplasm. In terms of biological role, the UvrABC repair system catalyzes the recognition and processing of DNA lesions. UvrA is an ATPase and a DNA-binding protein. A damage recognition complex composed of 2 UvrA and 2 UvrB subunits scans DNA for abnormalities. When the presence of a lesion has been verified by UvrB, the UvrA molecules dissociate. The chain is UvrABC system protein A from Xylella fastidiosa (strain Temecula1 / ATCC 700964).